Reading from the N-terminus, the 617-residue chain is Elongation factor 4 (617 aa).

The region spanning 17-198 (AIIRNFCIIA…KIVRDLPAPV (182 aa)) is the tr-type G domain. Residues 29–34 (DHGKST) and 145–148 (NKID) each bind GTP.

Belongs to the TRAFAC class translation factor GTPase superfamily. Classic translation factor GTPase family. LepA subfamily.

It is found in the cell membrane. It catalyses the reaction GTP + H2O = GDP + phosphate + H(+). In terms of biological role, required for accurate and efficient protein synthesis under certain stress conditions. May act as a fidelity factor of the translation reaction, by catalyzing a one-codon backward translocation of tRNAs on improperly translocated ribosomes. Back-translocation proceeds from a post-translocation (POST) complex to a pre-translocation (PRE) complex, thus giving elongation factor G a second chance to translocate the tRNAs correctly. Binds to ribosomes in a GTP-dependent manner. This Arthrobacter sp. (strain FB24) protein is Elongation factor 4.